The chain runs to 290 residues: uncharacterized protein (290 aa).

5 helical membrane-spanning segments follow: residues 10–27 (FFVARLLVVLYLSTLLLI), 32–54 (VNYIAVGILSVYFLINVYVYFFS), 69–91 (ILVPAFVFFSKILYSIYALGVLI), 100–117 (VLAGIILLETYGLAFFYF), and 121–143 (YLLMISHFILFLALFFTSYNFEY). A coiled-coil region spans residues 147–183 (VGKERKRILKLKKNYHKLLKEFSNFEREKRMFSNLRK).

Its subcellular location is the cell membrane. This is an uncharacterized protein from Aquifex aeolicus (strain VF5).